The sequence spans 3033 residues: Genome polyprotein (3033 aa).

Position 2 is an N-acetylserine; by host (Ser-2). The segment at 2–23 (STNPKPQRKTKRNTNRRPQDVK) is interaction with STAT1. The tract at residues 2 to 58 (STNPKPQRKTKRNTNRRPQDVKFPGGGQIVGGVYLLPRRGPRLGVRATRKTSERSQP) is interaction with EIF2AK2/PKR. Positions 2–59 (STNPKPQRKTKRNTNRRPQDVKFPGGGQIVGGVYLLPRRGPRLGVRATRKTSERSQPR) are interaction with DDX3X. Residues 2 to 75 (STNPKPQRKT…PKDRRSTGKS (74 aa)) are disordered. 2 short sequence motifs (nuclear localization signal) span residues 5-13 (PKPQRKTKR) and 38-43 (PRRGPR). The span at 7–16 (PQRKTKRNTN) shows a compositional bias: basic residues. A compositionally biased stretch (low complexity) spans 32 to 47 (GGVYLLPRRGPRLGVR). A Phosphoserine; by host modification is found at Ser-53. 2 consecutive short sequence motifs (nuclear localization signal) follow at residues 58-64 (PRGRRQP) and 66-71 (PKDRRS). 2 positions are modified to phosphoserine; by host: Ser-99 and Ser-116. Residues 112 to 152 (PRHRSRNLGRVIDTITCGFADLMGYIPVVGAPVGGVARALA) are important for endoplasmic reticulum and mitochondrial localization. Residues 122–173 (VIDTITCGFADLMGYIPVVGAPVGGVARALAHGVRVLEDGINYATRNLPGCS) form an interaction with APOA2 region. Residues 164–167 (YATR) form an important for lipid droplets localization region. Residues 178-191 (LLALLSCVTVPVSS) constitute a propeptide, ER anchor for the core protein, removed in mature form by host signal peptidase. Topologically, residues 190–358 (SSVEIRNIST…FGGHWGVVFG (169 aa)) are lumenal. Residues Asn-196 and Asn-209 are each glycosylated (N-linked (GlcNAc...) asparagine; by host). The important for fusion stretch occupies residues 265–296 (IVMAATVCSALYVGDVCGAVMIVSQALIVSPE). Asn-305 carries N-linked (GlcNAc...) asparagine; by host glycosylation. The chain crosses the membrane as a helical span at residues 359-379 (LAYFSMQGAWAKVIAILLLVA). Residues 380 to 729 (GVDATTYSTG…WEWVVLLFLL (350 aa)) lie on the Lumenal side of the membrane. The interval 385 to 412 (TYSTGATVGRTVGSFAGLFKLGAQQNVQ) is HVR1. N-linked (GlcNAc...) (high mannose) asparagine; by host glycosylation is found at Asn-417, Asn-423, and Asn-430. Intrachain disulfides connect Cys-429-Cys-554, Cys-452-Cys-459, Cys-488-Cys-496, and Cys-505-Cys-510. N-linked (GlcNAc...) asparagine; by host glycosylation is present at Asn-448. The segment at 475–480 (ETNVTN) is HVR2. The N-linked (GlcNAc...) asparagine; by host glycan is linked to Asn-477. The interval 482–495 (EDMRPYCWHYPPKP) is CD81-binding 1. N-linked (GlcNAc...) asparagine; by host glycosylation is present at Asn-534. Residues 546–553 (PPRGAWFG) form a CD81-binding 2 region. Residue Asn-558 is glycosylated (N-linked (GlcNAc...) asparagine; by host). 4 disulfides stabilise this stretch: Cys-566-Cys-571, Cys-585-Cys-589, Cys-601-Cys-624, and Cys-611-Cys-648. N-linked (GlcNAc...) (high mannose) asparagine; by host glycans are attached at residues Asn-627 and Asn-649. The cysteines at positions 656 and 681 are disulfide-linked. The PKR/eIF2-alpha phosphorylation homology domain (PePHD) stretch occupies residues 664–675 (GQQSPLLHSTTE). Residues 730–750 (LADARICACLWMLIILGQAEA) form a helical membrane-spanning segment. Topologically, residues 751–761 (ALEKLIILHSA) are lumenal. Residues 762–782 (SAASANGPLWFFIFFTAAWYL) traverse the membrane as a helical segment. The Cytoplasmic portion of the chain corresponds to 783-786 (KGRV). The chain crosses the membrane as a helical span at residues 787–807 (VPAATYSVLGLWSFLLLVLAL). Over 808–817 (PQQAYALDAA) the chain is Lumenal. A helical transmembrane segment spans residues 818-838 (EQGELGLVILMIISIFTLTPA). Residues 839 to 885 (YKILLSRSVWWLSYMLVLAEAQVQQWVPPLEARGGRDGIIWVAVILH) are Cytoplasmic-facing. The chain crosses the membrane as a helical span at residues 886-906 (PHLVFEVTKWLLAILGSAYLL). At 907-932 (KASLLRVPYFVRAHALLRVCTLVRHL) the chain is on the lumenal side. The Peptidase C18 domain occupies 907–1030 (KASLLRVPYF…GYTSKGWKLL (124 aa)). The interval 908–1210 (ASLLRVPYFV…PVESLDIARR (303 aa)) is protease NS2-3. Cys-926 is lipidated: S-palmitoyl cysteine; by host. A helical membrane pass occupies residues 933–953 (AGARYIQMLLITMGRWTGTYI). Residues 933–953 (AGARYIQMLLITMGRWTGTYI) form an interaction with host SCPS1 region. Topologically, residues 954-1661 (YDHLSPLSTW…CMQADLEVMT (708 aa)) are cytoplasmic. Residues His-956, Glu-976, and Cys-997 each act as for protease NS2 activity; shared with dimeric partner in the active site. Positions 1031 to 1212 (APITAYTQQT…ESLDIARRTP (182 aa)) constitute a Peptidase S29 domain. Active-site charge relay system; for serine protease NS3 activity residues include His-1087 and Asp-1111. Zn(2+) is bound by residues Cys-1127 and Cys-1129. Ser-1169 serves as the catalytic Charge relay system; for serine protease NS3 activity. Residues Cys-1175 and His-1179 each contribute to the Zn(2+) site. The Helicase ATP-binding domain occupies 1221-1373 (PAVPQTYQVG…ANIEEVALGH (153 aa)). 1234 to 1241 (APTGSGKS) contacts ATP. 2 residues coordinate Mg(2+): Ser-1241 and Glu-1321. The DECH box signature appears at 1320–1323 (DECH). Residues 1490 to 1502 (QRRGRTGRGRLGT) form an RNA-binding region. The helical transmembrane segment at 1662-1682 (STWVLAGGVLAAVAAYCLATG) threads the bilayer. Residues 1683–1694 (CISIIGRIHLND) are NS3-binding. Residues 1683–1809 (CISIIGRIHL…ALTSPLPTST (127 aa)) are Cytoplasmic-facing. Residues 1810–1830 (TILLNIMGGWLASQIAPPAGA) form a helical membrane-spanning segment. Residues 1831–1832 (TG) are Lumenal-facing. Residues 1833–1853 (FVVSGLVGAAVGSIGLGKILV) form a helical membrane-spanning segment. Asp-1854 is a topological domain (cytoplasmic). A helical membrane pass occupies residues 1855–1875 (VLAGYGAGISGALVAFKIMSG). Residues 1876-1885 (EKPSVEDVVN) lie on the Lumenal side of the membrane. The chain crosses the membrane as a helical span at residues 1886–1906 (LLPAILSPGALVVGVICAAIL). Topologically, residues 1907 to 1976 (RRHVGQGEGA…WITEDCPVPC (70 aa)) are cytoplasmic. Cys-1976 is lipidated: S-palmitoyl cysteine; by host. The stretch at 1977-2007 (SGSWLRDIWEWVCSILTDFKNWLSAKLLPKM) is an intramembrane region. Residues 2008–3012 (PGLPFISCQK…FHSVSHARPR (1005 aa)) are Cytoplasmic-facing. 4 residues coordinate Zn(2+): Cys-2015, Cys-2033, Cys-2035, and Cys-2056. The tract at residues 2124 to 2212 (EFFSWVDGVQ…ASSSASQLSA (89 aa)) is FKBP8-binding. Positions 2124-2332 (EFFSWVDGVQ…PVPPPRRRRA (209 aa)) are transcriptional activation. The segment at 2139-2143 (PTPGP) is interaction with non-structural protein 4A. Positions 2192 to 2213 (RRLARGSPPSQASSSASQLSAP) are disordered. Residues 2193–2460 (RLARGSPPSQ…ALITPCGPEE (268 aa)) form an interaction with host SKP2 region. Residues Ser-2198, Ser-2201, Ser-2205, Ser-2208, Ser-2211, and Ser-2214 each carry the phosphoserine; by host modification. The segment covering 2198-2213 (SPPSQASSSASQLSAP) has biased composition (low complexity). Residues 2214-2249 (SLKATCTTHKTAYDCDMVDANLFMGGDVTRIESDSK) are ISDR. Residues 2214 to 2275 (SLKATCTTHK…REPSVPSEYL (62 aa)) are interaction with EIF2AK2/PKR. The tract at residues 2249-2306 (KVIVLDSLDSMTEVEDDREPSVPSEYLTRRRKFPPALPPWARPDYNPPVIETWKRPDY) is NS4B-binding. The V3 stretch occupies residues 2299–2377 (ETWKRPDYEP…DTGGDSVQQP (79 aa)). An SH3-binding motif is present at residues 2322-2325 (APVP). Positions 2327-2335 (PRRRRARVL) match the Nuclear localization signal motif. A Glycyl lysine isopeptide (Lys-Gly) (interchain with G-Cter in ubiquitin) cross-link involves residue Lys-2350. The interval 2354–2431 (PLQDTNDSGH…IDSDSKSWST (78 aa)) is disordered. The span at 2355–2391 (LQDTNDSGHSTGADTGGDSVQQPSGETAASDAGSLSS) shows a compositional bias: polar residues. Ser-2471 and Ser-2484 each carry phosphoserine; by host. The RdRp catalytic domain maps to 2656–2774 (PMGFSYDTRC…ISESQGNEED (119 aa)). Positions 2662, 2760, and 2761 each coordinate Mg(2+). The chain crosses the membrane as a helical span at residues 3013–3033 (LLLLCLLLLSVGVGIFLLPAR).

It belongs to the hepacivirus polyprotein family. In terms of assembly, homooligomer. Interacts with E1 (via C-terminus). Interacts with the non-structural protein 5A. Interacts (via N-terminus) with host STAT1 (via SH2 domain); this interaction results in decreased STAT1 phosphorylation and ubiquitin-mediated proteasome-dependent STAT1 degradation, leading to decreased IFN-stimulated gene transcription. Interacts with host STAT3; this interaction constitutively activates STAT3. Interacts with host LTBR receptor. Interacts with host TNFRSF1A receptor and possibly induces apoptosis. Interacts with host HNRPK. Interacts with host YWHAE. Interacts with host UBE3A/E6AP. Interacts with host DDX3X. Interacts with host APOA2. Interacts with host RXRA protein. Interacts with host SP110 isoform 3/Sp110b; this interaction sequesters the transcriptional corepressor SP110 away from the nucleus. Interacts with host CREB3 nuclear transcription protein; this interaction triggers cell transformation. Interacts with host ACY3. Interacts with host C1QR1. Interacts with host RBM24; this interaction, which enhances the interaction of the mature core protein with 5'-UTR, may inhibit viral translation and favor replication. Interacts with host EIF2AK2/PKR; this interaction induces the autophosphorylation of EIF2AK2. Part of the viral assembly initiation complex composed of NS2, E1, E2, NS3, NS4A, NS5A and the mature core protein. Forms a heterodimer with envelope glycoprotein E2. Interacts with mature core protein. Interacts with protease NS2. The heterodimer E1/E2 interacts with host CLDN1; this interaction plays a role in viral entry into host cell. Interacts with host SPSB2 (via C-terminus). Part of the viral assembly initiation complex composed of NS2, E1, E2, NS3, NS4A, NS5A and the mature core protein. Interacts with host NEURL3; this interaction prevents E1 binding to glycoprotein E2. As to quaternary structure, forms a heterodimer with envelope glycoprotein E1. Interacts with host CD81 and SCARB1 receptors; these interactions play a role in viral entry into host cell. Interacts with host EIF2AK2/PKR; this interaction inhibits EIF2AK2 and probably allows the virus to evade the innate immune response. Interacts with host CD209/DC-SIGN and CLEC4M/DC-SIGNR. Interact with host SPCS1; this interaction is essential for viral particle assembly. Interacts with protease NS2. The heterodimer E1/E2 interacts with host CLDN1; this interaction plays a role in viral entry into host cell. Part of the viral assembly initiation complex composed of NS2, E1, E2, NS3, NS4A, NS5A and the mature core protein. Interacts with host SLC3A2/4F2hc; the interaction may facilitate viral entry into host cell. Interacts with human PLSCR1. In terms of assembly, homohexamer. Homoheptamer. Interacts with protease NS2. Homodimer. Interacts with host SPCS1; this interaction is essential for viral particle assembly. Interacts with envelope glycoprotein E1. Interacts with envelope glycoprotein E2. Interacts with viroporin p7. Interacts with serine protease/helicase NS3. Part of the replication complex composed of NS2, NS3, NS4A, NS4B, NS5A and the RNA-directed RNA polymerase embedded in an ER-derived membranous web. Part of the viral assembly initiation complex composed of NS2, E1, E2, NS3, NS4A, NS5A and the mature core protein. As to quaternary structure, interacts with protease NS2. Interacts with non-structural protein 4A; this interaction stabilizes the folding of NS3 serine protease. NS3-NS4A interaction is essential for NS3 activation and allows membrane anchorage of the latter. NS3/NS4A complex also prevents phosphorylation of host IRF3, thus preventing the establishment of dsRNA induced antiviral state. Interacts with host MAVS; this interaction leads to the cleavage and inhibition of host MAVS. Interacts with host TICAM1; this interaction leads to the cleavage and inhibition of host TICAM1. Interacts with host TANK-binding kinase/TBK1; this interaction results in the inhibition of the association between TBK1 and IRF3, which leads to the inhibition of IRF3 activation. Interacts with host RBM24. Part of the replication complex composed of NS2, NS3, NS4A, NS4B, NS5A and the RNA-directed RNA polymerase embedded in an ER-derived membranous web. Part of the viral assembly initiation complex composed of NS2, E1, E2, NS3, NS4A, NS5A and the mature core protein. In terms of assembly, interacts with NS3 serine protease; this interaction stabilizes the folding of NS3 serine protease. NS3-NS4A interaction is essential for NS3 activation and allows membrane anchorage of the latter. Interacts with non-structural protein 5A (via N-terminus). Part of the replication complex composed of NS2, NS3, NS4A, NS4B, NS5A and the RNA-directed RNA polymerase embedded in an ER-derived membranous web. Part of the viral assembly initiation complex composed of NS2, E1, E2, NS3, NS4A, NS5A and the mature core protein. Homomultimer. Interacts with non-structural protein NS5A. Interacts with host PLA2G4C; this interaction likely initiates the recruitment of replication complexes to lipid droplets. Interacts with host STING; this interaction disrupts the interaction between STING and TBK1 thereby suppressing the interferon signaling. Part of the replication complex composed of NS2, NS3, NS4A, NS4B, NS5A and the RNA-directed RNA polymerase embedded in an ER-derived membranous web. As to quaternary structure, monomer. Homodimer; dimerization is required for RNA-binding. Interacts with the mature core protein. Interacts (via N-terminus) with non-structural protein 4A. Interacts with non-structural protein 4B. Interacts (via region D2) with RNA-directed RNA polymerase. Part of the viral assembly initiation complex composed of NS2, E1, E2, NS3, NS4A, NS5A and the mature core protein. Part of the replication complex composed of NS2, NS3, NS4A, NS4B, NS5A and the RNA-directed RNA polymerase embedded in an ER-derived membranous web. Interacts with host GRB2. Interacts with host BIN1. Interacts with host PIK3R1. Interacts with host SRCAP. Interacts with host FKBP8. Interacts (via C-terminus) with host VAPB (via MSP domain). Interacts with host EIF2AK2/PKR; this interaction leads to disruption of EIF2AK2 dimerization by NS5A and probably allows the virus to evade the innate immune response. Interacts (via N-terminus) with host PACSIN2 (via N-terminus); this interaction attenuates protein kinase C alpha-mediated phosphorylation of PACSIN2 by disrupting the interaction between PACSIN2 and PRKCA. Interacts (via N-terminus) with host SRC kinase (via SH2 domain). Interacts with most Src-family kinases. Interacts with host IFI27 and SKP2; promotes the ubiquitin-mediated proteasomal degradation of NS5A. Interacts with host GPS2. Interacts with host TNFRSF21; this interaction allows the modulation by the virus of JNK, p38 MAPK, STAT3, and Akt signaling pathways in a DR6-dependent manner. Interacts (via N-terminus) with host CIDEB (via N-terminus); this interaction seems to regulate the association of HCV particles with APOE. Interacts with host CHKA/Choline Kinase-alpha; CHKA bridges host PI4KA and NS5A and potentiates NS5A-stimulated PI4KA activity, which then facilitates the targeting of the ternary complex to the ER for viral replication. Interacts with host SPSB2 (via C-terminus); this interaction targets NS5A for ubiquitination and degradation. Interacts with host RAB18; this interaction may promote the association of NS5A and other replicase components with lipid droplets. Interacts (via region D2) with host PPIA/CYPA; the interaction stimulates RNA-binding ability of NS5A and is dependent on the peptidyl-prolyl cis-trans isomerase activity of PPIA/CYPA. Interacts with host TRIM14; this interaction induces the degradation of NS5A. In terms of assembly, homooligomer. Interacts with non-structural protein 5A. Interacts with host VAPB. Interacts with host PRK2/PKN2. Interacts with host HNRNPA1 and SEPT6; these interactions facilitate viral replication. Part of the replication complex composed of NS2, NS3, NS4A, NS4B, NS5A and the RNA-directed RNA polymerase. The cofactor is Zn(2+). Mg(2+) is required as a cofactor. Specific enzymatic cleavages in vivo yield mature proteins. The structural proteins, core, E1, E2 and p7 are produced by proteolytic processing by host signal peptidases. The core protein precursor is synthesized as a 23 kDa, which is retained in the ER membrane through the hydrophobic signal peptide. Cleavage by the signal peptidase releases the 21 kDa mature core protein. The cleavage of the core protein precursor occurs between aminoacids 176 and 188 but the exact cleavage site is not known. Some degraded forms of the core protein appear as well during the course of infection. The other proteins (p7, NS2, NS3, NS4A, NS4B, NS5A and NS5B) are cleaved by the viral proteases. Autoprocessing between NS2 and NS3 is mediated by the NS2 cysteine protease catalytic domain and regulated by the NS3 N-terminal domain. In terms of processing, phosphorylated by host PKC and PKA. Post-translationally, ubiquitinated; mediated by UBE3A and leading to core protein subsequent proteasomal degradation. Highly N-glycosylated. In terms of processing, palmitoylation is required for NS2/3 autoprocessing and E2 recruitment to membranes. Post-translationally, palmitoylated. This modification may play a role in its polymerization or in protein-protein interactions. Phosphorylated on serines in a basal form termed p56. p58 is a hyperphosphorylated form of p56. p56 and p58 coexist in the cell in roughly equivalent amounts. Hyperphosphorylation is dependent on the presence of NS4A. Host CSNK1A1/CKI-alpha or RPS6KB1 kinases may be responsible for NS5A phosphorylation. In terms of processing, tyrosine phosphorylation is essential for the interaction with host SRC. Post-translationally, ubiquitinated. Ubiquitination, most probably at Lys-2350, mediated by host IFI27 and SKP2 leads to proteasomal degradation, restricting viral infection. Ubiquitination by host TRIM22 leads to interruption of viral replication. The N-terminus is phosphorylated by host PRK2/PKN2.

Its subcellular location is the host endoplasmic reticulum membrane. The protein resides in the host mitochondrion membrane. It is found in the virion. The protein localises to the host cytoplasm. It localises to the host nucleus. Its subcellular location is the host lipid droplet. The protein resides in the virion membrane. It is found in the host mitochondrion. The protein localises to the host cell membrane. It localises to the host perinuclear region. It carries out the reaction Hydrolysis of four peptide bonds in the viral precursor polyprotein, commonly with Asp or Glu in the P6 position, Cys or Thr in P1 and Ser or Ala in P1'.. It catalyses the reaction a ribonucleoside 5'-triphosphate + H2O = a ribonucleoside 5'-diphosphate + phosphate + H(+). The enzyme catalyses ATP + H2O = ADP + phosphate + H(+). The catalysed reaction is RNA(n) + a ribonucleoside 5'-triphosphate = RNA(n+1) + diphosphate. Inhibited by the antiviral drug hexamethylene amiloride. Inhibition by amantadine appears to be genotype-dependent. Also inhibited by long-alkyl-chain iminosugar derivatives. With respect to regulation, activity is up-regulated by PRK2/PKN2-mediated phosphorylation. Functionally, packages viral RNA to form a viral nucleocapsid, and promotes virion budding. Participates in the viral particle production as a result of its interaction with the non-structural protein 5A. Binds RNA and may function as a RNA chaperone to induce the RNA structural rearrangements taking place during virus replication. Modulates viral translation initiation by interacting with viral IRES and 40S ribosomal subunit. Affects various cell signaling pathways, host immunity and lipid metabolism. Prevents the establishment of cellular antiviral state by blocking the interferon-alpha/beta (IFN-alpha/beta) and IFN-gamma signaling pathways and by blocking the formation of phosphorylated STAT1 and promoting ubiquitin-mediated proteasome-dependent degradation of STAT1. Activates STAT3 leading to cellular transformation. Regulates the activity of cellular genes, including c-myc and c-fos. May repress the promoter of p53, and sequester CREB3 and SP110 isoform 3/Sp110b in the cytoplasm. Represses cell cycle negative regulating factor CDKN1A, thereby interrupting an important check point of normal cell cycle regulation. Targets transcription factors involved in the regulation of inflammatory responses and in the immune response: suppresses TNF-induced NF-kappa-B activation, and activates AP-1. Binds to dendritic cells (DCs) via C1QR1, resulting in down-regulation of T-lymphocytes proliferation. Alters lipid metabolism by interacting with hepatocellular proteins involved in lipid accumulation and storage. Induces up-regulation of FAS promoter activity, and thereby contributes to the increased triglyceride accumulation in hepatocytes (steatosis). Forms a heterodimer with envelope glycoprotein E2, which mediates virus attachment to the host cell, virion internalization through clathrin-dependent endocytosis and fusion with host membrane. Fusion with the host cell is most likely mediated by both E1 and E2, through conformational rearrangements of the heterodimer required for fusion rather than a classical class II fusion mechanism. E1/E2 heterodimer binds host apolipoproteins such as APOB and ApoE thereby forming a lipo-viro-particle (LVP). APOE associated to the LVP allows the initial virus attachment to cell surface receptors such as the heparan sulfate proteoglycans (HSPGs), syndecan-1 (SDC1), syndecan-1 (SDC2), the low-density lipoprotein receptor (LDLR) and scavenger receptor class B type I (SCARB1). The cholesterol transfer activity of SCARB1 allows E2 exposure and binding of E2 to SCARB1 and the tetraspanin CD81. E1/E2 heterodimer binding on CD81 activates the epithelial growth factor receptor (EGFR) signaling pathway. Diffusion of the complex E1-E2-EGFR-SCARB1-CD81 to the cell lateral membrane allows further interaction with Claudin 1 (CLDN1) and occludin (OCLN) to finally trigger HCV entry. In terms of biological role, forms a heterodimer with envelope glycoprotein E1, which mediates virus attachment to the host cell, virion internalization through clathrin-dependent endocytosis and fusion with host membrane. Fusion with the host cell is most likely mediated by both E1 and E2, through conformational rearrangements of the heterodimer required for fusion rather than a classical class II fusion mechanism. The interaction between envelope glycoprotein E2 and host apolipoprotein E/APOE allows the proper assembly, maturation and infectivity of the viral particles. This interaction is probably promoted via the up-regulation of cellular autophagy by the virus. E1/E2 heterodimer binds host apolipoproteins such as APOB and APOE thereby forming a lipo-viro-particle (LVP). APOE associated to the LVP allows the initial virus attachment to cell surface receptors such as the heparan sulfate proteoglycans (HSPGs), syndecan-1 (SDC1), syndecan-1 (SDC2), the low-density lipoprotein receptor (LDLR) and scavenger receptor class B type I (SCARB1). The cholesterol transfer activity of SCARB1 allows E2 exposure and binding of E2 to SCARB1 and the tetraspanin CD81. E1/E2 heterodimer binding on CD81 activates the epithelial growth factor receptor (EGFR) signaling pathway. Diffusion of the complex E1-E2-EGFR-SCARB1-CD81 to the cell lateral membrane allows further interaction with Claudin 1 (CLDN1) and occludin (OCLN) to finally trigger HCV entry. Inhibits host EIF2AK2/PKR activation, preventing the establishment of an antiviral state. Viral ligand for CD209/DC-SIGN and CLEC4M/DC-SIGNR, which are respectively found on dendritic cells (DCs), and on liver sinusoidal endothelial cells and macrophage-like cells of lymph node sinuses. These interactions allow the capture of circulating HCV particles by these cells and subsequent facilitated transmission to permissive cells such as hepatocytes and lymphocyte subpopulations. The interaction between E2 and host amino acid transporter complex formed by SLC3A2 and SLC7A5/LAT1 may facilitate viral entry into host cell. Its function is as follows. Ion channel protein that acts as a viroporin and plays an essential role in the assembly, envelopment and secretion of viral particles. Regulates the host cell secretory pathway, which induces the intracellular retention of viral glycoproteins and favors assembly of viral particles. Creates a pore in acidic organelles and releases Ca(2+) and H(+) in the cytoplasm of infected cells, leading to a productive viral infection. High levels of cytoplasmic Ca(2+) may trigger membrane trafficking and transport of viral ER-associated proteins to viroplasms, sites of viral genome replication. This ionic imbalance induces the assembly of the inflammasome complex, which triggers the maturation of pro-IL-1beta into IL-1beta through the action of caspase-1. Targets also host mitochondria and induces mitochondrial depolarization. In addition of its role as a viroporin, acts as a lipid raft adhesion factor. Functionally, cysteine protease required for the proteolytic auto-cleavage between the non-structural proteins NS2 and NS3. The N-terminus of NS3 is required for the function of NS2 protease (active region NS2-3). Promotes the initiation of viral particle assembly by mediating the interaction between structural and non-structural proteins. Displays three enzymatic activities: serine protease with a chymotrypsin-like fold, NTPase and RNA helicase. NS3 serine protease, in association with NS4A, is responsible for the cleavages of NS3-NS4A, NS4A-NS4B, NS4B-NS5A and NS5A-NS5B. The NS3/NS4A complex prevents phosphorylation of host IRF3, thus preventing the establishment of dsRNA induced antiviral state. The NS3/NS4A complex induces host amino acid transporter component SLC3A2, thus contributing to HCV propagation. NS3 RNA helicase binds to RNA and unwinds both dsDNA and dsRNA in the 3' to 5' direction, and likely resolves RNA complicated stable secondary structures in the template strand. Binds a single ATP and catalyzes the unzipping of a single base pair of dsRNA. Inhibits host antiviral proteins TBK1 and IRF3 thereby preventing the establishment of an antiviral state. Cleaves host MAVS/CARDIF thereby preventing the establishment of an antiviral state. Cleaves host TICAM1/TRIF, thereby disrupting TLR3 signaling and preventing the establishment of an antiviral state. In terms of biological role, induces a specific membrane alteration that serves as a scaffold for the virus replication complex. This membrane alteration gives rise to the so-called ER-derived membranous web that contains the replication complex. NS4B self-interaction contributes to its function in membranous web formation. Promotes host TRIF protein degradation in a CASP8-dependent manner thereby inhibiting host TLR3-mediated interferon signaling. Disrupts the interaction between STING and TBK1 contributing to the inhibition of interferon signaling. Its function is as follows. Phosphorylated protein that is indispensable for viral replication and assembly. Both hypo- and hyperphosphorylated states are required for the viral life cycle. The hyperphosphorylated form of NS5A is an inhibitor of viral replication. Involved in RNA-binding and especially in binding to the viral genome. Zinc is essential for RNA-binding. Participates in the viral particle production as a result of its interaction with the mature viral core protein. Its interaction with host VAPB may target the viral replication complex to vesicles. Down-regulates viral IRES translation initiation. Mediates interferon resistance, presumably by interacting with and inhibiting host EIF2AK2/PKR. Prevents BIN1-induced apoptosis. Acts as a transcriptional activator of some host genes important for viral replication when localized in the nucleus. Via the interaction with host PACSIN2, modulates lipid droplet formation in order to promote virion assembly. Modulates TNFRSF21/DR6 signaling pathway for viral propagation. Functionally, RNA-dependent RNA polymerase that performs primer-template recognition and RNA synthesis during viral replication. Initiates RNA transcription/replication at a flavin adenine dinucleotide (FAD), resulting in a 5'- FAD cap on viral RNAs. In this way, recognition of viral 5' RNA by host pattern recognition receptors can be bypassed, thereby evading activation of antiviral pathways. The polypeptide is Genome polyprotein (Hepatitis C virus genotype 2b (isolate JPUT971017) (HCV)).